We begin with the raw amino-acid sequence, 569 residues long: Urease subunit beta (569 aa).

Residues 131–569 form the Urease domain; sequence GGIDTHIHFI…VSLGQLYCLF (439 aa). Positions 136, 138, and 219 each coordinate Ni(2+). The residue at position 219 (Lys-219) is an N6-carboxylysine. His-221 lines the substrate pocket. His-248 and His-274 together coordinate Ni(2+). Catalysis depends on His-322, which acts as the Proton donor. Asp-362 serves as a coordination point for Ni(2+).

Belongs to the metallo-dependent hydrolases superfamily. Urease alpha subunit family. As to quaternary structure, heterohexamer of 3 UreA (alpha) and 3 UreB (beta) subunits. Ni cation serves as cofactor. In terms of processing, carboxylation allows a single lysine to coordinate two nickel ions.

Its subcellular location is the cytoplasm. The catalysed reaction is urea + 2 H2O + H(+) = hydrogencarbonate + 2 NH4(+). The protein operates within nitrogen metabolism; urea degradation; CO(2) and NH(3) from urea (urease route): step 1/1. This Helicobacter hepaticus (strain ATCC 51449 / 3B1) protein is Urease subunit beta.